Reading from the N-terminus, the 76-residue chain is Kappa-actitoxin-Avd4m (76 aa).

Positions 1-19 (MNKALFLCLVVLCAAVVFA) are cleaved as a signal peptide. Positions 20–31 (AEDLQKAKHAPF) are excised as a propeptide. Disulfide bonds link Cys-37–Cys-72, Cys-39–Cys-65, and Cys-55–Cys-73.

This sequence belongs to the sea anemone type 3 (BDS) potassium channel toxin family. In terms of tissue distribution, weakly expressed in the ectodermal tissue from the distal and proximal tentacles, body wall, and oral disk.

Its subcellular location is the secreted. It is found in the nematocyst. Blocks Kv3 voltage-gated potassium channels. Reduces blood pressure. The sequence is that of Kappa-actitoxin-Avd4m from Anemonia viridis (Snakelocks anemone).